Here is an 837-residue protein sequence, read N- to C-terminus: Telomere length regulation protein TEL2 homolog (837 aa).

Position 1 is an N-acetylmethionine (M1). A hydroxyproline mark is found at P374, P419, and P422. A disordered region spans residues 444–472; sequence QPAGDGASEAGTSLVPATAEPPAETPAEI. Position 456 is a phosphoserine (S456). Residues 459–471 are compositionally biased toward low complexity; it reads PATAEPPAETPAE. At S485 the chain carries Phosphoserine; by CK2. 2 positions are modified to phosphoserine: S487 and S491. The tract at residues 627 to 651 is disordered; that stretch reads GCLGRTPQPGSPSPNTPCLPEAAVS. S688 and S836 each carry phosphoserine.

This sequence belongs to the TEL2 family. In terms of assembly, component of the TTT complex composed of TELO2, TTI1 and TTI2. Interacts with ATM, ATR, MTOR, PRKDC, RUVBL2, TTI1, TTI2, SMG1 and TRRAP. Component of the mTORC1 and mTORC2 complexes. Interacts (phosphorylated form) with PIH1D1 which mediates interaction of TELO2 with the R2TP complex composed of RUVBL1, RUVBL2, PIH1D1, and RPAP3. Hydroxylation by PHD3 is required for a proper interaction with ATR, and activation of the ATR/CHK1/p53 pathway following DNA damage. In terms of processing, phosphorylated at Ser-485 by CK2 following growth factor deprivation, leading to its subsequent ubiquitination by the SCF(FBXO9) complex. Phosphorylation by CK2 only takes place when TELO2 is bound to mTORC1, not mTORC2; leading to selective ubiquitination of mTORC1-associated protein. Post-translationally, ubiquitinated by the SCF(FBXO9) complex following phosphorylation by CK2 in response to growth factor deprivation, leading to its degradation by the proteasome. Only mTORC1-associated protein is ubiquitinated and degraded, leading to selective inactivation of mTORC1 to restrain cell growth and protein translation, while mTORC2 is activated due to the relief of feedback inhibition by mTORC1.

It localises to the cytoplasm. The protein localises to the membrane. It is found in the nucleus. Its subcellular location is the chromosome. The protein resides in the telomere. In terms of biological role, regulator of the DNA damage response (DDR). Part of the TTT complex that is required to stabilize protein levels of the phosphatidylinositol 3-kinase-related protein kinase (PIKK) family proteins. The TTT complex is involved in the cellular resistance to DNA damage stresses, like ionizing radiation (IR), ultraviolet (UV) and mitomycin C (MMC). Together with the TTT complex and HSP90 may participate in the proper folding of newly synthesized PIKKs. Promotes assembly, stabilizes and maintains the activity of mTORC1 and mTORC2 complexes, which regulate cell growth and survival in response to nutrient and hormonal signals. May be involved in telomere length regulation. This Homo sapiens (Human) protein is Telomere length regulation protein TEL2 homolog (TELO2).